The following is a 286-amino-acid chain: Protein METABOLIC NETWORK MODULATOR 1 (286 aa).

The span at 1-10 (MEKESHEENN) shows a compositional bias: basic and acidic residues. Disordered regions lie at residues 1–60 (MEKE…DDEA), 123–146 (VMHH…GSGV), and 181–204 (GGER…SGAS). The segment covering 20–29 (KRKRGRPRKQ) has biased composition (basic residues). Residues 30-39 (LKLESNEHSL) are compositionally biased toward basic and acidic residues. Residues 131 to 140 (KRGRKSRFRE) show a composition bias toward basic residues. The span at 191–204 (PMQTETGSQASGAS) shows a compositional bias: polar residues.

In terms of tissue distribution, mailny observed in young seedlings and in emerging leaves.

Functionally, lineage-specific modulator of primary metabolism. Influences flowering time. In Arabidopsis thaliana (Mouse-ear cress), this protein is Protein METABOLIC NETWORK MODULATOR 1.